The primary structure comprises 490 residues: Beta-glucosidase 42 (490 aa).

A beta-D-glucoside is bound by residues Gln-35, His-137, 182–183, Tyr-317, and Glu-388; that span reads NE. Catalysis depends on Glu-183, which acts as the Proton donor. Glu-388 functions as the Nucleophile in the catalytic mechanism. Residue Asn-420 is glycosylated (N-linked (GlcNAc...) asparagine). Residues Trp-437, 444 to 445, and Phe-453 each bind a beta-D-glucoside; that span reads EW.

The protein belongs to the glycosyl hydrolase 1 family. Expressed at low levels predominantly in root epidermal cells.

The catalysed reaction is Hydrolysis of terminal, non-reducing beta-D-glucosyl residues with release of beta-D-glucose.. Glucosidase that hydrolyzes scopolin and various beta-glucosides, cellooligosaccharides (mainly cellotriose) and laminarioligosaccharides. Can use p-nitrophenyl-beta-glucosides (pNP beta-Glc) and p-nitrophenyl-beta-D-fucosides (pNP beta-D-Fuc) as substrates, and, to a lower extent, beta-galactosides, beta-mannosides and beta-xylosides. Involved in the secretion of root-derived phenolics upon iron ions (Fe) depletion. Promotes disease resistance toward B.cinerea, H.arabidopsidis and P.syringae pv. tomato DC3000. Required during rhizobacteria-mediated (e.g. P.fluorescens WCS417r) broad-spectrum induced systemic resistance (ISR) against several pathogens. The sequence is that of Beta-glucosidase 42 from Arabidopsis thaliana (Mouse-ear cress).